Here is a 446-residue protein sequence, read N- to C-terminus: Tektin-4 (446 aa).

3 coiled-coil regions span residues 182 to 215, 297 to 346, and 378 to 422; these read IRNV…MDYS, DAIA…NDKS, and SEVG…ANSI.

It belongs to the tektin family.

The protein resides in the cytoplasm. The protein localises to the cytoskeleton. Its subcellular location is the cilium axoneme. It localises to the cell projection. It is found in the cilium. The protein resides in the flagellum. In terms of biological role, microtubule inner protein (MIP) part of the dynein-decorated doublet microtubules (DMTs) in cilia and flagellar axoneme. Forms filamentous polymers in the walls of ciliary and flagellar microtubules. Contributes to normal sperm motility. The protein is Tektin-4 (tekt4) of Xenopus laevis (African clawed frog).